We begin with the raw amino-acid sequence, 700 residues long: Peroxisomal acyl-coenzyme A oxidase 1 (700 aa).

FAD contacts are provided by residues T147, G186, and 412 to 417 (CGGHGY). E437 acts as the Proton acceptor in catalysis. Positions 698–700 (SKL) match the Microbody targeting signal motif.

Belongs to the acyl-CoA oxidase family. It depends on FAD as a cofactor.

It is found in the peroxisome. The catalysed reaction is a 2,3-saturated acyl-CoA + O2 = a (2E)-enoyl-CoA + H2O2. In terms of biological role, catalyzes the desaturation of acyl-CoAs to 2-trans-enoyl-CoAs. First enzyme of the fatty acid beta-oxidation pathway. The sequence is that of Peroxisomal acyl-coenzyme A oxidase 1 (acox1) from Dictyostelium discoideum (Social amoeba).